A 671-amino-acid chain; its full sequence is UvrABC system protein B (671 aa).

The 388-residue stretch at 25–412 (EGIDAGLAHQ…AGRIVEQVVR (388 aa)) folds into the Helicase ATP-binding domain. 38–45 (GVTGSGKT) lines the ATP pocket. The short motif at 91 to 114 (YYDYYQPEAYVPSSDTFIEKDASI) is the Beta-hairpin element. The 154-residue stretch at 429 to 582 (QVDDLLSEIH…QIAFNLEHGI (154 aa)) folds into the Helicase C-terminal domain. The interval 601–624 (PGSRSKKRKGMAKAAEENARYENE) is disordered. A compositionally biased stretch (basic and acidic residues) spans 614 to 624 (AAEENARYENE). The region spanning 632-667 (NKRIRQLEEKMYQLARDLEFEAAAQMRDEIGKLRER) is the UVR domain.

This sequence belongs to the UvrB family. Forms a heterotetramer with UvrA during the search for lesions. Interacts with UvrC in an incision complex.

It is found in the cytoplasm. The UvrABC repair system catalyzes the recognition and processing of DNA lesions. A damage recognition complex composed of 2 UvrA and 2 UvrB subunits scans DNA for abnormalities. Upon binding of the UvrA(2)B(2) complex to a putative damaged site, the DNA wraps around one UvrB monomer. DNA wrap is dependent on ATP binding by UvrB and probably causes local melting of the DNA helix, facilitating insertion of UvrB beta-hairpin between the DNA strands. Then UvrB probes one DNA strand for the presence of a lesion. If a lesion is found the UvrA subunits dissociate and the UvrB-DNA preincision complex is formed. This complex is subsequently bound by UvrC and the second UvrB is released. If no lesion is found, the DNA wraps around the other UvrB subunit that will check the other stand for damage. The sequence is that of UvrABC system protein B from Pseudomonas syringae pv. syringae (strain B728a).